Here is a 344-residue protein sequence, read N- to C-terminus: F17a-G fimbrial adhesin (344 aa).

Positions 1–22 (MTNFYKVFLAVFILVCCNISQA) are cleaved as a signal peptide. The tract at residues 23–199 (AVSFIGSTEN…SLNPFTLNDT (177 aa)) is receptor-binding lectin domain. A carbohydrate contacts are provided by residues 65-66 (AN), 110-111 (DT), and 139-142 (STQG). Cys75 and Cys132 are disulfide-bonded. A fimbrillin-binding domain region spans residues 200–344 (VTSCRLLTPS…GISTFTFSYQ (145 aa)). Positions 288–308 (LKFGPDSPVKGNENQWQLSTG) are disordered. Over residues 299–308 (NENQWQLSTG) the composition is skewed to polar residues.

The protein belongs to the fimbrial protein family.

The protein resides in the fimbrium. Its function is as follows. Essential fimbrial adhesion factor that mediates binding to N-acetylglucosamine-containing receptors in the host intestinal microvilli, leading to colonization of the intestinal tissue, and diarrhea or septicemia. Also confers adhesiveness to laminin and basement membranes. The polypeptide is F17a-G fimbrial adhesin (f17aG) (Escherichia coli).